The primary structure comprises 98 residues: HssA/B-like protein 50 (98 aa).

Disordered stretches follow at residues methionine 1–serine 26 and threonine 68–isoleucine 98. Residues glycine 84–isoleucine 98 are compositionally biased toward gly residues.

The protein belongs to the hssA/B family.

The chain is HssA/B-like protein 50 (hssl50) from Dictyostelium discoideum (Social amoeba).